The sequence spans 207 residues: Nudix hydrolase 4 (207 aa).

The Nudix hydrolase domain occupies 58–194; sequence GYRQVVGCVP…WMREALEAFI (137 aa). The Nudix box motif lies at 101–122; sequence GGWETDESMEEAALRETIEEAG. Positions 116 and 120 each coordinate Mg(2+).

It belongs to the Nudix hydrolase family. Mg(2+) is required as a cofactor. The cofactor is Mn(2+). Expressed in roots, stems and leaves.

The catalysed reaction is ADP-D-ribose + H2O = D-ribose 5-phosphate + AMP + 2 H(+). The enzyme catalyses NAD(+) + H2O = beta-nicotinamide D-ribonucleotide + AMP + 2 H(+). It carries out the reaction NADH + H2O = reduced beta-nicotinamide D-ribonucleotide + AMP + 2 H(+). In terms of biological role, probably mediates the hydrolysis of some nucleoside diphosphate derivatives. In vitro, it can use both NADH and ADP-ribose as substrates; however the relevance of such substrates in vivo is unclear. The chain is Nudix hydrolase 4 (NUDT4) from Arabidopsis thaliana (Mouse-ear cress).